Reading from the N-terminus, the 604-residue chain is Putative ankyrin repeat protein L56 (604 aa).

ANK repeat units lie at residues 77–106 (IDRYCILLSCKFGFVELLEYLDEIGVDILV), 135–164 (FFKSSIHYAVKYGHMNIIEYLSCKKTNADG), 166–189 (LSACSLKNIQLVKYFLDQQNYDDN), 190–219 (TIYHGLRSACWNGDLEMVKYFMQYIPEDKR), 221–247 (NVFILDHVCEEGYFDILVYLIEQKWKI), 248–277 (DVEFAIKQTVMGGRLEMLKYLIAQYPDSKY), 314–341 (KFSKLLEVVCERGYLKVFKILFHLNENV), 342–371 (DLREAFSNACQNGHLDIVQYIISNKKEFTD), 380–410 (EHITYLTRITFAKGHLDILKCLDEIGISRSY), 445–474 (YSQAIAVKAFRYDTVSVIKYLVSVGLDIKP), 475–504 (ITNIALDYICINNNMDCLKYLIENGTDITI), 505–534 (NDNRAIKLAAQEDNIDIVKCLVENGADIRT), and 535–565 (DDDYVMKICTLRNHKVLIRYLMSLDIKEPSN).

The protein is Putative ankyrin repeat protein L56 of Acanthamoeba polyphaga (Amoeba).